Reading from the N-terminus, the 228-residue chain is Lipoprotein-releasing system ATP-binding protein LolD (228 aa).

One can recognise an ABC transporter domain in the interval 6–228 (IKCINLNKSY…ENNQIFNYES (223 aa)). 42-49 (GKSGSGKT) contacts ATP.

It belongs to the ABC transporter superfamily. Lipoprotein translocase (TC 3.A.1.125) family.

The protein localises to the cell inner membrane. Usually LolD forms an ABC transporter complex with LolC and LolE involved in the translocation of lipoprotein, in an ATP-dependent manner. However, LolE is certainly not functional as it is frameshifted. This chain is Lipoprotein-releasing system ATP-binding protein LolD, found in Buchnera aphidicola subsp. Acyrthosiphon pisum (strain APS) (Acyrthosiphon pisum symbiotic bacterium).